The sequence spans 177 residues: Large ribosomal subunit protein uL6 (177 aa).

The protein belongs to the universal ribosomal protein uL6 family. Part of the 50S ribosomal subunit.

This protein binds to the 23S rRNA, and is important in its secondary structure. It is located near the subunit interface in the base of the L7/L12 stalk, and near the tRNA binding site of the peptidyltransferase center. The sequence is that of Large ribosomal subunit protein uL6 from Rickettsia rickettsii (strain Iowa).